A 486-amino-acid polypeptide reads, in one-letter code: Nucleolar protein 56 (486 aa).

Positions 298–416 (CAPSLSALIG…VEDRLEYFTS (119 aa)) constitute a Nop domain. The disordered stretch occupies residues 450–486 (KKAKRLAEESVTATAEAEVDEDAPKPKKKKKSKAGDE). Positions 475–486 (PKKKKKSKAGDE) are enriched in basic residues.

It belongs to the NOP5/NOP56 family.

The protein localises to the nucleus. It is found in the nucleolus. Required for 60S ribosomal subunit synthesis. This chain is Nucleolar protein 56, found in Caenorhabditis elegans.